The primary structure comprises 249 residues: ATP synthase subunit a, chloroplastic (249 aa).

5 helical membrane-spanning segments follow: residues 38-58 (AQVL…AVLA), 97-117 (VPFI…GALL), 136-156 (INTT…AGLH), 201-221 (LVVA…MMFL), and 222-242 (GLFT…AYIG).

Belongs to the ATPase A chain family. F-type ATPases have 2 components, CF(1) - the catalytic core - and CF(0) - the membrane proton channel. CF(1) has five subunits: alpha(3), beta(3), gamma(1), delta(1), epsilon(1). CF(0) has four main subunits: a, b, b' and c.

It localises to the plastid. Its subcellular location is the chloroplast thylakoid membrane. Its function is as follows. Key component of the proton channel; it plays a direct role in the translocation of protons across the membrane. The sequence is that of ATP synthase subunit a, chloroplastic from Physcomitrium patens (Spreading-leaved earth moss).